The chain runs to 384 residues: Alanine racemase (384 aa).

Lys-39 functions as the Proton acceptor; specific for D-alanine in the catalytic mechanism. Position 39 is an N6-(pyridoxal phosphate)lysine (Lys-39). Residue Arg-136 participates in substrate binding. Tyr-265 functions as the Proton acceptor; specific for L-alanine in the catalytic mechanism. Position 312 (Met-312) interacts with substrate.

This sequence belongs to the alanine racemase family. The cofactor is pyridoxal 5'-phosphate.

It carries out the reaction L-alanine = D-alanine. Its pathway is amino-acid biosynthesis; D-alanine biosynthesis; D-alanine from L-alanine: step 1/1. In terms of biological role, catalyzes the interconversion of L-alanine and D-alanine. May also act on other amino acids. In Geobacillus kaustophilus (strain HTA426), this protein is Alanine racemase (alr).